A 786-amino-acid chain; its full sequence is Endonuclease MutS2 (786 aa).

332-339 (GPNTGGKT) serves as a coordination point for ATP. Positions 710–785 (VDLRGLDAEE…GDGVTMVELK (76 aa)) constitute a Smr domain.

The protein belongs to the DNA mismatch repair MutS family. MutS2 subfamily. Homodimer. Binds to stalled ribosomes, contacting rRNA.

Functionally, endonuclease that is involved in the suppression of homologous recombination and thus may have a key role in the control of bacterial genetic diversity. In terms of biological role, acts as a ribosome collision sensor, splitting the ribosome into its 2 subunits. Detects stalled/collided 70S ribosomes which it binds and splits by an ATP-hydrolysis driven conformational change. Acts upstream of the ribosome quality control system (RQC), a ribosome-associated complex that mediates the extraction of incompletely synthesized nascent chains from stalled ribosomes and their subsequent degradation. Probably generates substrates for RQC. This is Endonuclease MutS2 from Clostridium beijerinckii (strain ATCC 51743 / NCIMB 8052) (Clostridium acetobutylicum).